We begin with the raw amino-acid sequence, 290 residues long: Glycine--tRNA ligase alpha subunit (290 aa).

Belongs to the class-II aminoacyl-tRNA synthetase family. As to quaternary structure, tetramer of two alpha and two beta subunits.

It is found in the cytoplasm. The enzyme catalyses tRNA(Gly) + glycine + ATP = glycyl-tRNA(Gly) + AMP + diphosphate. In Prochlorococcus marinus (strain NATL2A), this protein is Glycine--tRNA ligase alpha subunit.